A 432-amino-acid chain; its full sequence is Adenosylhomocysteinase (432 aa).

The interval 1–24 is disordered; sequence MSAYSPLSAQLDADTDVDVESTRT. Asp-137 and Glu-162 together coordinate substrate. Residue 163-165 participates in NAD(+) binding; it reads TTT. The substrate site is built by Lys-192 and Asp-196. Residues Asn-197, 226-231, Glu-249, Asn-284, 305-307, and Asn-352 contribute to the NAD(+) site; these read GYGYCG and AGH.

It belongs to the adenosylhomocysteinase family. NAD(+) serves as cofactor.

It localises to the cytoplasm. The enzyme catalyses S-adenosyl-L-homocysteine + H2O = L-homocysteine + adenosine. Its pathway is amino-acid biosynthesis; L-homocysteine biosynthesis; L-homocysteine from S-adenosyl-L-homocysteine: step 1/1. In terms of biological role, may play a key role in the regulation of the intracellular concentration of adenosylhomocysteine. The polypeptide is Adenosylhomocysteinase (Haloquadratum walsbyi (strain DSM 16790 / HBSQ001)).